A 244-amino-acid chain; its full sequence is Complement C1q subcomponent subunit A (244 aa).

An N-terminal signal peptide occupies residues 1–22 (MEAPRGWLVISVLAISLASSVT). The tract at residues 28–94 (APDGTHGSAG…PGPSGPMGPA (67 aa)) is disordered. Residues 31 to 109 (GTHGSAGIPG…KGTKGSPGNI (79 aa)) enclose the Collagen-like domain. 4-hydroxyproline occurs at positions 39 and 45. Lys-48 is subject to 5-hydroxylysine. O-linked (Gal...) hydroxylysine glycosylation is present at Lys-48. Residues Pro-54 and Pro-57 each carry the 4-hydroxyproline modification. 5-hydroxylysine is present on Lys-67. A glycan (O-linked (Gal...) hydroxylysine) is linked at Lys-67. Pro-73, Pro-79, and Pro-85 each carry 4-hydroxyproline. The segment covering 79–94 (PGRMGYPGPSGPMGPA) has biased composition (low complexity). Position 100 is a 5-hydroxylysine (Lys-100). The O-linked (Gal...) hydroxylysine glycan is linked to Lys-100. Residues 110–244 (KDQPRPAFSA…FSGFLIFPSA (135 aa)) form the C1q domain. Residue Asn-146 is glycosylated (N-linked (GlcNAc...) asparagine). An intrachain disulfide couples Cys-172 to Cys-189. Gln-198 is a Ca(2+) binding site.

As to quaternary structure, core component of the complement C1 complex, a calcium-dependent complex composed of 1 molecule of the C1Q subcomplex, 2 molecules of C1R and 2 molecules of C1S. The C1Q subcomplex is composed 18 subunits: 3 chains of C1QA, C1QB, and C1QC trimerize to form 6 collagen-like triple helices connected to six globular ligand-recognition modules (C1q domain). Interacts with CR1 (via Sushi 24 and Sushi 25 domains). Interacts (via C-terminus) with CD33; this interaction activates CD33 inhibitory motifs. O-linked glycans are assumed to be the Glc-Gal disaccharides typically found as secondary modifications of hydroxylated lysines in collagen-like domains.

The protein localises to the secreted. It is found in the cell surface. With respect to regulation, the C1Q subcomplex is inhibited by sulfated molecules, such as triterpenoid sulfates, heparan sulfate, or chondroitin sulfates. Core component of the complement C1 complex, a multiprotein complex that initiates the classical pathway of the complement system, a cascade of proteins that leads to phagocytosis and breakdown of pathogens and signaling that strengthens the adaptive immune system. The classical complement pathway is initiated by the C1Q subcomplex of the C1 complex, which specifically binds IgG or IgM immunoglobulins complexed with antigens, forming antigen-antibody complexes on the surface of pathogens: C1QA, together with C1QB and C1QC, specifically recognizes and binds the Fc regions of IgG or IgM via its C1q domain. Immunoglobulin-binding activates the proenzyme C1R, which cleaves C1S, initiating the proteolytic cascade of the complement system. The C1Q subcomplex is activated by a hexamer of IgG complexed with antigens, while it is activated by a pentameric IgM. The C1Q subcomplex also recognizes and binds phosphatidylserine exposed on the surface of cells undergoing programmed cell death, possibly promoting activation of the complement system. This Bos taurus (Bovine) protein is Complement C1q subcomponent subunit A (C1QA).